The following is a 116-amino-acid chain: Movement protein TGB2 (116 aa).

Over 1–11 the chain is Cytoplasmic; it reads MPLTPPPNPQK. The chain crosses the membrane as a helical span at residues 12 to 32; it reads TYQIAILALGLVLLAFVLISD. The Lumenal portion of the chain corresponds to 33-77; the sequence is HSPKVGDHLHNLPFGGEYKDGTKSIKYFQRPNQHSLSKTLAKSHN. Residues 78–98 form a helical membrane-spanning segment; sequence TTIFLLILGLIVTLHGLHYFN. Residues 99-116 are Cytoplasmic-facing; sequence NNRRVSSSLHCVLCQNKH.

This sequence belongs to the Tymovirales TGBp2 protein family.

It is found in the host endoplasmic reticulum membrane. Its function is as follows. Plays a role in viral cell-to-cell propagation, by facilitating genome transport to neighboring plant cells through plasmosdesmata,. The protein is Movement protein TGB2 of White clover mosaic virus (strain M) (WCMV).